The chain runs to 60 residues: Large ribosomal subunit protein bL32 (60 aa).

The segment at 1 to 23 (MAVPKRKKSKSRRNMHRSHHAIK) is disordered.

It belongs to the bacterial ribosomal protein bL32 family.

This Wolbachia sp. subsp. Brugia malayi (strain TRS) protein is Large ribosomal subunit protein bL32.